The sequence spans 233 residues: 2-phytyl-1,4-naphtoquinone methyltransferase (233 aa).

This sequence belongs to the class I-like SAM-binding methyltransferase superfamily. MenG/UbiE family.

The enzyme catalyses demethylphylloquinol + S-adenosyl-L-methionine = phylloquinol + S-adenosyl-L-homocysteine + H(+). It participates in cofactor biosynthesis; phylloquinone biosynthesis. In terms of biological role, methyltransferase required for the conversion of 2-phytyl-1,4-beta-naphthoquinol to phylloquinol. This is 2-phytyl-1,4-naphtoquinone methyltransferase from Synechococcus elongatus (strain ATCC 33912 / PCC 7942 / FACHB-805) (Anacystis nidulans R2).